The following is a 97-amino-acid chain: Putative membrane protein insertion efficiency factor (97 aa).

The disordered stretch occupies residues 77-97; sequence VPDAPASPSPSSSCSCKGPHP. Low complexity predominate over residues 85-97; the sequence is SPSSSCSCKGPHP.

The protein belongs to the UPF0161 family.

The protein localises to the cell inner membrane. In terms of biological role, could be involved in insertion of integral membrane proteins into the membrane. This chain is Putative membrane protein insertion efficiency factor, found in Xanthomonas euvesicatoria pv. vesicatoria (strain 85-10) (Xanthomonas campestris pv. vesicatoria).